Here is a 308-residue protein sequence, read N- to C-terminus: Elongation factor Ts (308 aa).

The tract at residues 80 to 83 (TDFV) is involved in Mg(2+) ion dislocation from EF-Tu.

This sequence belongs to the EF-Ts family.

It localises to the cytoplasm. Functionally, associates with the EF-Tu.GDP complex and induces the exchange of GDP to GTP. It remains bound to the aminoacyl-tRNA.EF-Tu.GTP complex up to the GTP hydrolysis stage on the ribosome. In Rhizobium etli (strain ATCC 51251 / DSM 11541 / JCM 21823 / NBRC 15573 / CFN 42), this protein is Elongation factor Ts.